Here is a 448-residue protein sequence, read N- to C-terminus: Glutamyl-tRNA reductase (448 aa).

Substrate is bound by residues 49–52 (TCNR), S109, 114–116 (ETQ), and Q120. Catalysis depends on C50, which acts as the Nucleophile. 189–194 (GAGEMS) contacts NADP(+).

The protein belongs to the glutamyl-tRNA reductase family. In terms of assembly, homodimer.

The catalysed reaction is (S)-4-amino-5-oxopentanoate + tRNA(Glu) + NADP(+) = L-glutamyl-tRNA(Glu) + NADPH + H(+). The protein operates within porphyrin-containing compound metabolism; protoporphyrin-IX biosynthesis; 5-aminolevulinate from L-glutamyl-tRNA(Glu): step 1/2. Catalyzes the NADPH-dependent reduction of glutamyl-tRNA(Glu) to glutamate 1-semialdehyde (GSA). In Staphylococcus aureus (strain bovine RF122 / ET3-1), this protein is Glutamyl-tRNA reductase.